We begin with the raw amino-acid sequence, 319 residues long: tRNA-cytidine(32) 2-sulfurtransferase (319 aa).

The PP-loop motif motif lies at 43-48; that stretch reads SGGKDS. Residues Cys-118, Cys-121, and Cys-209 each contribute to the [4Fe-4S] cluster site.

The protein belongs to the TtcA family. Homodimer. Requires Mg(2+) as cofactor. [4Fe-4S] cluster is required as a cofactor.

The protein localises to the cytoplasm. The catalysed reaction is cytidine(32) in tRNA + S-sulfanyl-L-cysteinyl-[cysteine desulfurase] + AH2 + ATP = 2-thiocytidine(32) in tRNA + L-cysteinyl-[cysteine desulfurase] + A + AMP + diphosphate + H(+). The protein operates within tRNA modification. Functionally, catalyzes the ATP-dependent 2-thiolation of cytidine in position 32 of tRNA, to form 2-thiocytidine (s(2)C32). The sulfur atoms are provided by the cysteine/cysteine desulfurase (IscS) system. This chain is tRNA-cytidine(32) 2-sulfurtransferase, found in Neisseria meningitidis serogroup C / serotype 2a (strain ATCC 700532 / DSM 15464 / FAM18).